The sequence spans 144 residues: Large ribosomal subunit protein uL15 (144 aa).

The tract at residues 1–25 (MFLNTIGARDGSRPEKKRVGRGIGS) is disordered.

This sequence belongs to the universal ribosomal protein uL15 family. Part of the 50S ribosomal subunit.

In terms of biological role, binds to the 23S rRNA. The polypeptide is Large ribosomal subunit protein uL15 (Methylococcus capsulatus (strain ATCC 33009 / NCIMB 11132 / Bath)).